Here is a 126-residue protein sequence, read N- to C-terminus: Glycine cleavage system H protein (126 aa).

One can recognise a Lipoyl-binding domain in the interval 24-105 (TLTVGITDHA…AYGVWLFKIK (82 aa)). Residue lysine 65 is modified to N6-lipoyllysine.

The protein belongs to the GcvH family. As to quaternary structure, the glycine cleavage system is composed of four proteins: P, T, L and H. It depends on (R)-lipoate as a cofactor.

The glycine cleavage system catalyzes the degradation of glycine. The H protein shuttles the methylamine group of glycine from the P protein to the T protein. This Burkholderia cenocepacia (strain ATCC BAA-245 / DSM 16553 / LMG 16656 / NCTC 13227 / J2315 / CF5610) (Burkholderia cepacia (strain J2315)) protein is Glycine cleavage system H protein.